The sequence spans 127 residues: Mu-like prophage FluMu protein gp41 (127 aa).

Residues 107 to 127 form a disordered region; that stretch reads VSRGRLDTADQETGKDLSAVS. Residues 110 to 121 are compositionally biased toward basic and acidic residues; sequence GRLDTADQETGK.

To phage Mu protein gp41.

This is Mu-like prophage FluMu protein gp41 from Haemophilus influenzae (strain ATCC 51907 / DSM 11121 / KW20 / Rd).